The sequence spans 382 residues: Lysophosphatidylserine lipase ABHD12 (382 aa).

Residues 1–12 (MRKRKGSADHDS) are compositionally biased toward basic and acidic residues. The tract at residues 1–45 (MRKRKGSADHDSSFTATLTDGSSDLKQCHKGTDADTDPGGSGKEM) is disordered. At 1 to 60 (MRKRKGSADHDSSFTATLTDGSSDLKQCHKGTDADTDPGGSGKEMGRRCRRGGLMWRLRR) the chain is on the cytoplasmic side. Residues 13–25 (SFTATLTDGSSDL) are compositionally biased toward polar residues. A helical membrane pass occupies residues 61 to 81 (ILIWLLGIYIAIPVIIKVCPS). The Extracellular segment spans residues 82–382 (IQAKLVFLNF…DFLRAPHPHG (301 aa)). N109 carries an N-linked (GlcNAc...) asparagine glycan. The active-site Nucleophile is the S232. Residues D319 and H358 each act as charge relay system in the active site.

The protein belongs to the serine esterase family. Ubiquitously expressed in adult tissues.

It is found in the endoplasmic reticulum membrane. It carries out the reaction 1-(9Z-octadecenoyl)-sn-glycero-3-phospho-L-serine + H2O = sn-glycero-3-phospho-L-serine + (9Z)-octadecenoate + H(+). The catalysed reaction is 1-(9Z-octadecenoyl)-sn-glycero-3-phospho-(1'-sn-glycerol) + H2O = sn-glycero-3-phospho-(1'-sn-glycerol) + (9Z)-octadecenoate + H(+). The enzyme catalyses 1-(9Z-octadecenoyl)-sn-glycero-3-phospho-(1D-myo-inositol) + H2O = sn-glycero-3-phospho-1D-myo-inositol + (9Z)-octadecenoate + H(+). It catalyses the reaction 1-(9Z-octadecenoyl)-sn-glycero-3-phosphoethanolamine + H2O = sn-glycero-3-phosphoethanolamine + (9Z)-octadecenoate + H(+). It carries out the reaction 1-(9Z-octadecenoyl)-sn-glycero-3-phosphocholine + H2O = 1-(9Z-octadecenoyl)-sn-glycerol + phosphocholine + H(+). The catalysed reaction is 2-(9Z-octadecenoyl)-glycerol + H2O = glycerol + (9Z)-octadecenoate + H(+). The enzyme catalyses 1-hexadecanoyl-sn-glycero-3-phospho-L-serine + H2O = sn-glycero-3-phospho-L-serine + hexadecanoate + H(+). It catalyses the reaction 2-(5Z,8Z,11Z,14Z-eicosatetraenoyl)-glycerol + H2O = glycerol + (5Z,8Z,11Z,14Z)-eicosatetraenoate + H(+). It carries out the reaction Hydrolyzes glycerol monoesters of long-chain fatty acids.. The catalysed reaction is 1-decanoylglycerol + H2O = decanoate + glycerol + H(+). The enzyme catalyses 1-dodecanoylglycerol + H2O = dodecanoate + glycerol + H(+). It catalyses the reaction 1-tetradecanoylglycerol + H2O = tetradecanoate + glycerol + H(+). It carries out the reaction 2-hexadecanoylglycerol + H2O = glycerol + hexadecanoate + H(+). The catalysed reaction is 1-(9Z-octadecenoyl)-glycerol + H2O = glycerol + (9Z)-octadecenoate + H(+). The enzyme catalyses 2-(9Z,12Z-octadecadienoyl)-glycerol + H2O = (9Z,12Z)-octadecadienoate + glycerol + H(+). It catalyses the reaction 1-(5Z,8Z,11Z,14Z-eicosatetraenoyl)-glycerol + H2O = glycerol + (5Z,8Z,11Z,14Z)-eicosatetraenoate + H(+). It carries out the reaction 1-(9Z,12Z-octadecadienoyl)-glycerol + H2O = (9Z,12Z)-octadecadienoate + glycerol + H(+). The catalysed reaction is 1-hexadecanoylglycerol + H2O = glycerol + hexadecanoate + H(+). The enzyme catalyses 1-octadecanoylglycerol + H2O = octadecanoate + glycerol + H(+). It catalyses the reaction 1-octadecanoyl-2-(9,10-epoxyoctadecanoyl)-sn-glycero-3-phospho-L-serine + H2O = 9,10-epoxyoctadecanoate + 1-octadecanoyl-sn-glycero-3-phosphoserine + H(+). It carries out the reaction 1-octadecanoyl-2-(10-hydroxyoctadecanoyl)-sn-glycero-3-phospho-L-serine + H2O = 1-octadecanoyl-sn-glycero-3-phosphoserine + 10-hydroxyoctadecanoate + H(+). The catalysed reaction is 1-hexadecanoyl-2-(10-hydroxyoctadecanoyl)-sn-glycero-3-phospho-L-serine + H2O = 10-hydroxyoctadecanoate + 1-hexadecanoyl-sn-glycero-3-phospho-L-serine + H(+). Lysophosphatidylserine (LPS) lipase that mediates the hydrolysis of lysophosphatidylserine, a class of signaling lipids that regulates immunological and neurological processes. Represents a major lysophosphatidylserine lipase in the brain, thereby playing a key role in the central nervous system. Also able to hydrolyze oxidized phosphatidylserine; oxidized phosphatidylserine is produced in response to severe inflammatory stress and constitutes a proapoptotic 'eat me' signal. Also has monoacylglycerol (MAG) lipase activity: hydrolyzes 2-arachidonoylglycerol (2-AG), thereby acting as a regulator of endocannabinoid signaling pathways. Has a strong preference for very-long-chain lipid substrates; substrate specificity is likely due to improved catalysis and not improved substrate binding. This Danio rerio (Zebrafish) protein is Lysophosphatidylserine lipase ABHD12.